Reading from the N-terminus, the 215-residue chain is Protein GET1 (215 aa).

Residues 1–4 (MINL) are Lumenal-facing. The helical transmembrane segment at 5–24 (ALVIFLCTLLNQIVSWVGKS) threads the bilayer. Residues 25–108 (VLQEIAFTAY…SFSKKFSTLL (84 aa)) lie on the Cytoplasmic side of the membrane. Residues 73 to 94 (AKLRRKLDKGLADLEKTNNTLS) adopt a coiled-coil conformation. The chain crosses the membrane as a helical span at residues 109–129 (WLMTTGAQFLLSWWFRKQPIF). Topologically, residues 130 to 153 (WLPEGWVPYPVAWLLSFPSAPIGS) are lumenal. The helical transmembrane segment at 154 to 170 (VSSGAWGAICRRVLSTL) threads the bilayer. Over 171 to 215 (QEIIQSLLAPSPAATGPVPTGPSSAKNDQPEAKIEALALEHEKLD) the chain is Cytoplasmic. The tract at residues 182–202 (PAATGPVPTGPSSAKNDQPEA) is disordered.

Belongs to the WRB/GET1 family. Interacts with GET3.

Its subcellular location is the endoplasmic reticulum membrane. Its function is as follows. Required for the post-translational delivery of tail-anchored (TA) proteins to the endoplasmic reticulum. Acts as a membrane receptor for soluble GET3, which recognizes and selectively binds the transmembrane domain of TA proteins in the cytosol. In Cryptococcus neoformans var. neoformans serotype D (strain JEC21 / ATCC MYA-565) (Filobasidiella neoformans), this protein is Protein GET1.